Here is a 157-residue protein sequence, read N- to C-terminus: C-type lectin 9a (157 aa).

The signal sequence occupies residues Met1–Ala23. 3 disulfides stabilise this stretch: Cys27–Cys38, Cys55–Cys151, and Cys126–Cys143. The C-type lectin domain maps to Tyr34–Lys152.

Belongs to the snaclec family. Heteromultimer; disulfide-linked. In terms of tissue distribution, expressed by the venom gland.

Its subcellular location is the secreted. In terms of biological role, interferes with one step of hemostasis (modulation of platelet aggregation, or coagulation cascade, for example). The chain is C-type lectin 9a from Crotalus adamanteus (Eastern diamondback rattlesnake).